We begin with the raw amino-acid sequence, 1373 residues long: Disease resistance protein RRS1 (1373 aa).

A TIR domain is found at 5–146 (EKDEEFVCIS…EIVRDVYETH (142 aa)). Residues 170 to 421 (IGIRCVGIWG…LLEGCGFFPH (252 aa)) form the NB-ARC domain. 179-186 (GMPGIGKT) is an ATP binding site. LRR repeat units lie at residues 498 to 522 (SEEI…AFKN), 535 to 553 (NPEV…HSLP), 554 to 575 (NELR…NFDP), 577 to 598 (HLVE…TKNL), 621 to 646 (AENL…RLLR), 665 to 688 (PPNI…TVKP), 742 to 766 (LPNM…SIQG), 768 to 793 (PRFL…SLEI), and 831 to 854 (PRNL…PLSL). Residues 988–1005 (RNFHCWAPGKVVPKVRKD) carry the Nuclear localization signal motif. Positions 1204 to 1272 (IPAIDEGDLW…YLSEHNHPRP (69 aa)) form a DNA-binding region, WRKY. Positions 1300–1323 (RVFQNKDEPNKPHLPSSSTPPGNA) are disordered.

As to quaternary structure, interacts with PopP2, a R.solanacearum type III effector.

It is found in the nucleus. Its function is as follows. Transcription factor. Interacts specifically with the W box (5'-(T)TGAC[CT]-3'), a frequently occurring elicitor-responsive cis-acting element. Also acts as a disease resistance protein involved in resistance to fungal and bacterial pathogens, including R.solanacearum, P.syringae pv. tomato and C.higginsianum. The protein is Disease resistance protein RRS1 of Arabidopsis thaliana (Mouse-ear cress).